Here is a 295-residue protein sequence, read N- to C-terminus: Indole-3-glycerol phosphate synthase (295 aa).

This sequence belongs to the TrpC family.

It carries out the reaction 1-(2-carboxyphenylamino)-1-deoxy-D-ribulose 5-phosphate + H(+) = (1S,2R)-1-C-(indol-3-yl)glycerol 3-phosphate + CO2 + H2O. Its pathway is amino-acid biosynthesis; L-tryptophan biosynthesis; L-tryptophan from chorismate: step 4/5. The polypeptide is Indole-3-glycerol phosphate synthase (Synechococcus sp. (strain CC9605)).